A 416-amino-acid polypeptide reads, in one-letter code: Probable glucan 1,3-beta-glucosidase A (416 aa).

Residues 1 to 22 form the signal peptide; that stretch reads MIFKFSQKALVALCLVVGLAEA. Glu211 serves as the catalytic Proton donor. Cystine bridges form between Cys291-Cys415 and Cys316-Cys342. The active-site Nucleophile is the Glu308.

It belongs to the glycosyl hydrolase 5 (cellulase A) family. Monomer. Mn(2+) is required as a cofactor.

It is found in the secreted. The catalysed reaction is Successive hydrolysis of beta-D-glucose units from the non-reducing ends of (1-&gt;3)-beta-D-glucans, releasing alpha-glucose.. Functionally, beta-glucanases participate in the metabolism of beta-glucan, the main structural component of the cell wall. It could also function biosynthetically as a transglycosylase. The chain is Probable glucan 1,3-beta-glucosidase A (exgA) from Neosartorya fischeri (strain ATCC 1020 / DSM 3700 / CBS 544.65 / FGSC A1164 / JCM 1740 / NRRL 181 / WB 181) (Aspergillus fischerianus).